The primary structure comprises 57 residues: Mambalgin-3 (57 aa).

4 disulfides stabilise this stretch: Cys-3–Cys-19, Cys-12–Cys-37, Cys-41–Cys-49, and Cys-50–Cys-55.

Belongs to the three-finger toxin family. Short-chain subfamily. Mambalgin sub-subfamily. As to expression, expressed by the venom gland.

The protein localises to the secreted. This three-finger toxin inhibits ASIC channels. It acts as a gating modifier toxin by decreasing the apparent proton sensitivity of activation and by slightly increasing the apparent proton sensitivity for inactivation. It binds more tightly to the closed state and to a much lesser extent the inactivated/desensitized state of ASIC1a. It interacts directly with the outside surface of the thumb domain of chicken ASIC1a (ASIC1a), but does not insert into the acidic pocket as suggested previously. This binding leads to relocation of the thumb domain that could disrupt the acidic pocket of cASIC1a. The peptide exerts both stimulatory and inhibitory effects on ASIC1a. It reversibly inhibits rASIC1a (IC(50)=17 nM), rASIC1b (IC(50)= 44 nM) and rASIC1a-rASIC2a (IC(50)=252 nM) channels. In vivo, it shows a potent naloxone-resistant analgesic effect against acute and inflammatory pain upon central and peripheral injection. In addition, it also has an opioid-independent effect on both thermal and mechanical inflammatory pain after systemic administration and is effective against neuropathic pain. In Dendroaspis angusticeps (Eastern green mamba), this protein is Mambalgin-3.